The primary structure comprises 89 residues: Large ribosomal subunit protein bL27 (89 aa).

The disordered stretch occupies residues 1-21 (MAHKKGASSSRNGRDSNAQRL). The span at 7–19 (ASSSRNGRDSNAQ) shows a compositional bias: polar residues.

It belongs to the bacterial ribosomal protein bL27 family.

The sequence is that of Large ribosomal subunit protein bL27 from Frankia alni (strain DSM 45986 / CECT 9034 / ACN14a).